A 402-amino-acid chain; its full sequence is Putative neuropeptide Y receptor 11 (402 aa).

Residues Met1–Ala45 are Extracellular-facing. 2 N-linked (GlcNAc...) asparagine glycosylation sites follow: Asn5 and Asn29. A helical transmembrane segment spans residues Tyr46–Leu66. Topologically, residues Asn67–Asp85 are cytoplasmic. A helical transmembrane segment spans residues Phe86–Pro106. Residues Phe107 to Asn122 lie on the Extracellular side of the membrane. Cys112 and Cys194 form a disulfide bridge. A helical transmembrane segment spans residues Ile123–Phe143. Residues Pro144–Asn152 lie on the Cytoplasmic side of the membrane. Residues Leu153–Leu173 form a helical membrane-spanning segment. Residues Gln174–Thr210 lie on the Extracellular side of the membrane. The chain crosses the membrane as a helical span at residues Tyr211–Tyr231. The Cytoplasmic portion of the chain corresponds to Ser232 to Leu272. Residues Leu273–Phe293 traverse the membrane as a helical segment. Over Asn294–Thr306 the chain is Extracellular. A helical transmembrane segment spans residues Phe307–Phe328. Over Asn329–Leu402 the chain is Cytoplasmic.

It belongs to the G-protein coupled receptor 1 family.

The protein localises to the cell membrane. Its function is as follows. Could be a receptor for neuropeptide Y and peptide YY. This chain is Putative neuropeptide Y receptor 11 (npr-11), found in Caenorhabditis elegans.